We begin with the raw amino-acid sequence, 504 residues long: MNVFFMFSLLFLAALGSCADDRNPLEECFRETDYEEFLEIARNGLKATSNPKHVVIVGAGMSGLSAAYVLSGAGHQVTVLEASERAGGRVRTYRNDKEGWYANLGPMRLPEKHRIVREYIRKFGLQLNEFSQENDNAWYFIKNIRKRVGEVKKDPGVLKYPVKPSEEGKSAGQLYEESLGKVVEELKRTNCSYILNKYDTYSTKEYLLKEGNLSPGAVDMIGDLMNEDSGYYVSFPESLRHDDIFAYEKRFDEIVGGMDKLPTSMYRAIEEKVHLNAQVIKIQKNAEKVTVVYQTPAKEMASVTADYVIVCTTSRATRRIKFEPPLPPKKAHALRSVHYRSGTKIFLTCTKKFWEDEGIHGGKSTTDLPSRFIYYPNHNFTSGVGVIIAYGIGDDANFFQALDFKDCADIVINDLSLIHQLPREEIQTFCYPSMIQKWSLDKYAMGGITTFTPYQFQHFSEPLTASVDRIYFAGEHTAEAHGWIDSTIKSGLRAARDVNRASEQ.

Residues 1-18 (MNVFFMFSLLFLAALGSC) form the signal peptide. An intrachain disulfide couples Cys-28 to Cys-191. FAD is bound by residues 61-62 (MS), 81-82 (EA), Arg-89, and 105-108 (GPMR). Arg-108 is a substrate binding site. N-linked (GlcNAc...) asparagine glycosylation is present at Asn-190. His-241 contributes to the substrate binding site. Val-279 serves as a coordination point for FAD. Cys-349 and Cys-430 form a disulfide bridge. Asn-379 carries N-linked (GlcNAc...) asparagine glycosylation. Tyr-390 serves as a coordination point for substrate. Residues Glu-475 and 482–487 (GWIDST) each bind FAD. A substrate-binding site is contributed by 482-483 (GW).

The protein belongs to the flavin monoamine oxidase family. FIG1 subfamily. As to quaternary structure, homodimer; non-covalently linked. FAD is required as a cofactor. As to expression, expressed by the venom gland.

It is found in the secreted. It catalyses the reaction an L-alpha-amino acid + O2 + H2O = a 2-oxocarboxylate + H2O2 + NH4(+). The enzyme catalyses L-leucine + O2 + H2O = 4-methyl-2-oxopentanoate + H2O2 + NH4(+). Catalyzes an oxidative deamination of predominantly hydrophobic and aromatic L-amino acids, thus producing hydrogen peroxide that may contribute to the diverse toxic effects of this enzyme. Shows activity on L-Leu. Exhibits diverse biological activities, such as apoptosis, and inhibition of agonist- and shear stress-induced platelet aggregation (SIPA). Effects of snake L-amino oxidases on platelets are controversial, since they either induce aggregation or inhibit agonist-induced aggregation. These different effects are probably due to different experimental conditions. This protein may also induce hemorrhage, hemolysis, edema, antibacterial and antiparasitic activities. In Gloydius blomhoffii (Mamushi), this protein is L-amino-acid oxidase.